Consider the following 171-residue polypeptide: Disulfide bond formation protein B (171 aa).

The Cytoplasmic portion of the chain corresponds to 1–10 (MQRLLTYRAL). A helical membrane pass occupies residues 11–27 (NFILFIASVVAMLFAII). At 28–46 (FLQNYKGLEPCPLCIFQRI) the chain is on the periplasmic side. Cysteines 38 and 41 form a disulfide. A helical membrane pass occupies residues 47–63 (GLMVMGGFSLIAAVGHP). Residues 64–70 (KKMGMQL) lie on the Cytoplasmic side of the membrane. Residues 71-88 (LLWIGSMAGILWSAGVAA) traverse the membrane as a helical segment. Residues 89 to 145 (RHVWIQHLPADQVPACGPGLDYFLEALPMKQVINQVLSGSGECAEISWRFLGLSIPE) lie on the Periplasmic side of the membrane. Residues C104 and C131 are joined by a disulfide bond. Residues 146–164 (QALILFTALILVNLLVLWR) traverse the membrane as a helical segment. Residues 165 to 171 (IISKRTA) are Cytoplasmic-facing.

The protein belongs to the DsbB family.

It localises to the cell inner membrane. Functionally, required for disulfide bond formation in some periplasmic proteins. Acts by oxidizing the DsbA protein. In Psychrobacter sp. (strain PRwf-1), this protein is Disulfide bond formation protein B.